A 190-amino-acid chain; its full sequence is Protein LZIC (190 aa).

Positions 2–63 form a coiled coil; the sequence is ASRGKTETSK…SEFNDSLKKI (62 aa).

The protein belongs to the CTNNBIP1 family. Does not interact with CTNNB1. In terms of tissue distribution, ubiquitously expressed, with highest levels in kidney. Up-regulated in several cases of gastric cancers.

The polypeptide is Protein LZIC (LZIC) (Homo sapiens (Human)).